A 156-amino-acid polypeptide reads, in one-letter code: Small ribosomal subunit protein uS7 (156 aa).

The protein belongs to the universal ribosomal protein uS7 family. Part of the 30S ribosomal subunit. Contacts proteins S9 and S11.

Its function is as follows. One of the primary rRNA binding proteins, it binds directly to 16S rRNA where it nucleates assembly of the head domain of the 30S subunit. Is located at the subunit interface close to the decoding center, probably blocks exit of the E-site tRNA. The chain is Small ribosomal subunit protein uS7 from Arthrobacter sp. (strain FB24).